We begin with the raw amino-acid sequence, 365 residues long: tRNA 2-selenouridine synthase (365 aa).

Positions 12-136 (FLDDVPMMDM…LRTFLLDTTQ (125 aa)) constitute a Rhodanese domain. C95 functions as the S-selanylcysteine intermediate in the catalytic mechanism.

Belongs to the SelU family. Monomer.

The enzyme catalyses 5-methylaminomethyl-2-thiouridine(34) in tRNA + selenophosphate + (2E)-geranyl diphosphate + H2O + H(+) = 5-methylaminomethyl-2-selenouridine(34) in tRNA + (2E)-thiogeraniol + phosphate + diphosphate. It carries out the reaction 5-methylaminomethyl-2-thiouridine(34) in tRNA + (2E)-geranyl diphosphate = 5-methylaminomethyl-S-(2E)-geranyl-thiouridine(34) in tRNA + diphosphate. It catalyses the reaction 5-methylaminomethyl-S-(2E)-geranyl-thiouridine(34) in tRNA + selenophosphate + H(+) = 5-methylaminomethyl-2-(Se-phospho)selenouridine(34) in tRNA + (2E)-thiogeraniol. The catalysed reaction is 5-methylaminomethyl-2-(Se-phospho)selenouridine(34) in tRNA + H2O = 5-methylaminomethyl-2-selenouridine(34) in tRNA + phosphate. In terms of biological role, involved in the post-transcriptional modification of the uridine at the wobble position (U34) of tRNA(Lys), tRNA(Glu) and tRNA(Gln). Catalyzes the conversion of 2-thiouridine (S2U-RNA) to 2-selenouridine (Se2U-RNA). Acts in a two-step process involving geranylation of 2-thiouridine (S2U) to S-geranyl-2-thiouridine (geS2U) and subsequent selenation of the latter derivative to 2-selenouridine (Se2U) in the tRNA chain. The polypeptide is tRNA 2-selenouridine synthase (Pseudomonas putida (strain W619)).